A 119-amino-acid chain; its full sequence is NADH-quinone oxidoreductase subunit A (119 aa).

The next 3 membrane-spanning stretches (helical) occupy residues 7 to 27, 63 to 83, and 88 to 108; these read YPVLLFLLVGTGLGIALVSIG, LVAILFIIFDLETAFLFPWGV, and IGWPGFIAMMIFLLEFLLGFA.

The protein belongs to the complex I subunit 3 family. NDH-1 is composed of 14 different subunits. Subunits NuoA, H, J, K, L, M, N constitute the membrane sector of the complex.

Its subcellular location is the cell inner membrane. It catalyses the reaction a quinone + NADH + 5 H(+)(in) = a quinol + NAD(+) + 4 H(+)(out). NDH-1 shuttles electrons from NADH, via FMN and iron-sulfur (Fe-S) centers, to quinones in the respiratory chain. The immediate electron acceptor for the enzyme in this species is believed to be ubiquinone. Couples the redox reaction to proton translocation (for every two electrons transferred, four hydrogen ions are translocated across the cytoplasmic membrane), and thus conserves the redox energy in a proton gradient. The protein is NADH-quinone oxidoreductase subunit A of Burkholderia ambifaria (strain MC40-6).